The chain runs to 378 residues: Cytochrome b (378 aa).

4 consecutive transmembrane segments (helical) span residues 34-54 (FGSL…FLAM), 78-99 (WLLR…YLHV), 114-134 (WLIG…GYVL), and 179-199 (FFTF…IHLL). Heme b is bound by residues His84 and His98. Heme b contacts are provided by His183 and His197. His202 provides a ligand contact to a ubiquinone. A run of 4 helical transmembrane segments spans residues 227 to 247 (FKDI…VLIS), 289 to 309 (LGGV…PFYN), 321 to 341 (INQV…WIGA), and 348 to 368 (YVLI…VNPL).

It belongs to the cytochrome b family. In terms of assembly, the main subunits of complex b-c1 are: cytochrome b, cytochrome c1 and the Rieske protein. Requires heme b as cofactor.

Its subcellular location is the mitochondrion inner membrane. In terms of biological role, component of the ubiquinol-cytochrome c reductase complex (complex III or cytochrome b-c1 complex) that is part of the mitochondrial respiratory chain. The b-c1 complex mediates electron transfer from ubiquinol to cytochrome c. Contributes to the generation of a proton gradient across the mitochondrial membrane that is then used for ATP synthesis. The polypeptide is Cytochrome b (mt:Cyt-b) (Drosophila mauritiana (Fruit fly)).